An 85-amino-acid polypeptide reads, in one-letter code: Large ribosomal subunit protein bL27 (85 aa).

Belongs to the bacterial ribosomal protein bL27 family.

The protein is Large ribosomal subunit protein bL27 of Stutzerimonas stutzeri (strain A1501) (Pseudomonas stutzeri).